We begin with the raw amino-acid sequence, 456 residues long: Bifunctional protein GlmU (456 aa).

A pyrophosphorylase region spans residues 1-229 (MSNSSMSVVI…LSEVEGVNNR (229 aa)). Residues 11–14 (LAAG), K25, Q76, 81–82 (GT), 103–105 (YGD), G140, E154, N169, and N227 each bind UDP-N-acetyl-alpha-D-glucosamine. D105 is a Mg(2+) binding site. N227 contacts Mg(2+). The segment at 230-250 (LQLAALERVYQSEQAEKLLLA) is linker. An N-acetyltransferase region spans residues 251–456 (GVMLLDPARF…QGWQRPIKKK (206 aa)). The UDP-N-acetyl-alpha-D-glucosamine site is built by R333 and K351. H363 functions as the Proton acceptor in the catalytic mechanism. Positions 366 and 377 each coordinate UDP-N-acetyl-alpha-D-glucosamine. Acetyl-CoA contacts are provided by residues A380, 386–387 (NY), S405, A423, and R440.

In the N-terminal section; belongs to the N-acetylglucosamine-1-phosphate uridyltransferase family. It in the C-terminal section; belongs to the transferase hexapeptide repeat family. In terms of assembly, homotrimer. Mg(2+) is required as a cofactor.

The protein localises to the cytoplasm. The catalysed reaction is alpha-D-glucosamine 1-phosphate + acetyl-CoA = N-acetyl-alpha-D-glucosamine 1-phosphate + CoA + H(+). The enzyme catalyses N-acetyl-alpha-D-glucosamine 1-phosphate + UTP + H(+) = UDP-N-acetyl-alpha-D-glucosamine + diphosphate. It functions in the pathway nucleotide-sugar biosynthesis; UDP-N-acetyl-alpha-D-glucosamine biosynthesis; N-acetyl-alpha-D-glucosamine 1-phosphate from alpha-D-glucosamine 6-phosphate (route II): step 2/2. It participates in nucleotide-sugar biosynthesis; UDP-N-acetyl-alpha-D-glucosamine biosynthesis; UDP-N-acetyl-alpha-D-glucosamine from N-acetyl-alpha-D-glucosamine 1-phosphate: step 1/1. Its pathway is bacterial outer membrane biogenesis; LPS lipid A biosynthesis. Catalyzes the last two sequential reactions in the de novo biosynthetic pathway for UDP-N-acetylglucosamine (UDP-GlcNAc). The C-terminal domain catalyzes the transfer of acetyl group from acetyl coenzyme A to glucosamine-1-phosphate (GlcN-1-P) to produce N-acetylglucosamine-1-phosphate (GlcNAc-1-P), which is converted into UDP-GlcNAc by the transfer of uridine 5-monophosphate (from uridine 5-triphosphate), a reaction catalyzed by the N-terminal domain. The polypeptide is Bifunctional protein GlmU (Yersinia enterocolitica serotype O:8 / biotype 1B (strain NCTC 13174 / 8081)).